Reading from the N-terminus, the 473-residue chain is ATP synthase subunit beta (473 aa).

Position 158–165 (158–165 (GGAGVGKT)) interacts with ATP.

Belongs to the ATPase alpha/beta chains family. In terms of assembly, F-type ATPases have 2 components, CF(1) - the catalytic core - and CF(0) - the membrane proton channel. CF(1) has five subunits: alpha(3), beta(3), gamma(1), delta(1), epsilon(1). CF(0) has three main subunits: a(1), b(2) and c(9-12). The alpha and beta chains form an alternating ring which encloses part of the gamma chain. CF(1) is attached to CF(0) by a central stalk formed by the gamma and epsilon chains, while a peripheral stalk is formed by the delta and b chains.

Its subcellular location is the cell membrane. It carries out the reaction ATP + H2O + 4 H(+)(in) = ADP + phosphate + 5 H(+)(out). In terms of biological role, produces ATP from ADP in the presence of a proton gradient across the membrane. The catalytic sites are hosted primarily by the beta subunits. The sequence is that of ATP synthase subunit beta from Anoxybacillus flavithermus (strain DSM 21510 / WK1).